The chain runs to 616 residues: Chaperone protein HscA (616 aa).

Belongs to the heat shock protein 70 family.

Functionally, chaperone involved in the maturation of iron-sulfur cluster-containing proteins. Has a low intrinsic ATPase activity which is markedly stimulated by HscB. Involved in the maturation of IscU. The chain is Chaperone protein HscA from Pectobacterium atrosepticum (strain SCRI 1043 / ATCC BAA-672) (Erwinia carotovora subsp. atroseptica).